A 361-amino-acid polypeptide reads, in one-letter code: Tyrosine--tRNA ligase (361 aa).

5 residues coordinate L-tyrosine: Tyr-36, Tyr-162, Gln-166, Asp-169, and Gln-184. The short motif at 236–240 is the 'KMSKS' region element; it reads KMSKS. Lys-239 is an ATP binding site.

It belongs to the class-I aminoacyl-tRNA synthetase family. TyrS type 4 subfamily. In terms of assembly, homodimer.

The protein resides in the cytoplasm. The catalysed reaction is tRNA(Tyr) + L-tyrosine + ATP = L-tyrosyl-tRNA(Tyr) + AMP + diphosphate + H(+). Catalyzes the attachment of tyrosine to tRNA(Tyr) in a two-step reaction: tyrosine is first activated by ATP to form Tyr-AMP and then transferred to the acceptor end of tRNA(Tyr). The protein is Tyrosine--tRNA ligase of Saccharolobus islandicus (strain Y.N.15.51 / Yellowstone #2) (Sulfolobus islandicus).